Here is a 629-residue protein sequence, read N- to C-terminus: tRNA uridine 5-carboxymethylaminomethyl modification enzyme MnmG (629 aa).

13 to 18 (GGGHAG) contributes to the FAD binding site. 273 to 287 (GPRYCPSIEDKVNRF) is a binding site for NAD(+).

Belongs to the MnmG family. Homodimer. Heterotetramer of two MnmE and two MnmG subunits. FAD is required as a cofactor.

It is found in the cytoplasm. Functionally, NAD-binding protein involved in the addition of a carboxymethylaminomethyl (cmnm) group at the wobble position (U34) of certain tRNAs, forming tRNA-cmnm(5)s(2)U34. The protein is tRNA uridine 5-carboxymethylaminomethyl modification enzyme MnmG of Hahella chejuensis (strain KCTC 2396).